The chain runs to 281 residues: Elongation factor Ts (281 aa).

The involved in Mg(2+) ion dislocation from EF-Tu stretch occupies residues 86–89; that stretch reads TDFV.

Belongs to the EF-Ts family.

Its subcellular location is the cytoplasm. In terms of biological role, associates with the EF-Tu.GDP complex and induces the exchange of GDP to GTP. It remains bound to the aminoacyl-tRNA.EF-Tu.GTP complex up to the GTP hydrolysis stage on the ribosome. In Beutenbergia cavernae (strain ATCC BAA-8 / DSM 12333 / CCUG 43141 / JCM 11478 / NBRC 16432 / NCIMB 13614 / HKI 0122), this protein is Elongation factor Ts.